We begin with the raw amino-acid sequence, 102 residues long: Small ribosomal subunit protein bS6 (102 aa).

Belongs to the bacterial ribosomal protein bS6 family.

Its function is as follows. Binds together with bS18 to 16S ribosomal RNA. The polypeptide is Small ribosomal subunit protein bS6 (Deinococcus geothermalis (strain DSM 11300 / CIP 105573 / AG-3a)).